Consider the following 102-residue polypeptide: Small ribosomal subunit protein uS10 (102 aa).

Belongs to the universal ribosomal protein uS10 family. As to quaternary structure, part of the 30S ribosomal subunit.

In terms of biological role, involved in the binding of tRNA to the ribosomes. The protein is Small ribosomal subunit protein uS10 of Clostridium acetobutylicum (strain ATCC 824 / DSM 792 / JCM 1419 / IAM 19013 / LMG 5710 / NBRC 13948 / NRRL B-527 / VKM B-1787 / 2291 / W).